The primary structure comprises 95 residues: Protein TusB (95 aa).

Belongs to the DsrH/TusB family. In terms of assembly, heterohexamer, formed by a dimer of trimers. The hexameric TusBCD complex contains 2 copies each of TusB, TusC and TusD. The TusBCD complex interacts with TusE.

The protein resides in the cytoplasm. In terms of biological role, part of a sulfur-relay system required for 2-thiolation of 5-methylaminomethyl-2-thiouridine (mnm(5)s(2)U) at tRNA wobble positions. The protein is Protein TusB of Escherichia coli (strain ATCC 8739 / DSM 1576 / NBRC 3972 / NCIMB 8545 / WDCM 00012 / Crooks).